The chain runs to 1716 residues: DNA-directed RNA polymerase I subunit RPA1 (1716 aa).

Positions 64, 67, 74, 77, 104, and 107 each coordinate Zn(2+). Residues 110 to 201 (LTCPRAAIHL…VAHFWKTHMA (92 aa)) are clamp. Zn(2+) contacts are provided by cysteine 205 and cysteine 208. Positions 327-433 (FTNGQTVNLQ…IRQILEKKEG (107 aa)) are clamp. The tract at residues 410–423 (DSDMDKLMLEKYPG) is rudder. Residues lysine 431, arginine 436, and arginine 443 each contribute to the DNA site. The involved in RRN3 binding to Pol I complex stretch occupies residues 475 to 549 (YPQPVTPWNV…QGAKVVCRHV (75 aa)). Arginine 559 lines the RNA pocket. The Mg(2+) site is built by aspartate 595, aspartate 597, and aspartate 599. Aspartate 599 is a binding site for RNA. Residues 812-890 (KPNADVMRQR…NEINKACMPF (79 aa)) are funnel. The bridging helix stretch occupies residues 967-1008 (RPPEFFFHCMAGREGLVDTAVKTSRSGYLQRCIIKHLEGLVI). Residues 1067-1162 (ADPQKVLRHF…SLSVWRPDIH (96 aa)) are mediates the interaction with TOP2A. The tract at residues 1214–1255 (PGEAVGLLAAQSIGEPSTQMTLNTFHFAGRGEMNVTLGIPRL) is trigger loop. Arginine 1256 contacts DNA. The tract at residues 1368–1493 (ASAFRSVNTR…RHSRPQGAEA (126 aa)) is disordered. Basic and acidic residues predominate over residues 1380–1397 (TQKDLDDTEDSGRNRREE). 2 stretches are compositionally biased toward acidic residues: residues 1398-1419 (ERDE…DADA) and 1429-1451 (EEEV…VQEE). Over residues 1452 to 1464 (ENIKGEGAHQTHE) the composition is skewed to basic and acidic residues. Acidic residues predominate over residues 1465-1477 (PDEEEGSGLEEES).

The protein belongs to the RNA polymerase beta' chain family. In terms of assembly, component of the RNA polymerase I (Pol I) complex consisting of 13 subunits: a ten-subunit catalytic core composed of POLR1A/RPA1, POLR1B/RPA2, POLR1C/RPAC1, POLR1D/RPAC2, POLR1H/RPA12, POLR2E/RPABC1, POLR2F/RPABC2, POLR2H/RPABC3, POLR2K/RPABC4 and POLR2L/RPABC5; a mobile stalk subunit POLR1F/RPA43 protruding from the core and additional subunits homologous to general transcription factors POLR1E/RPA49 and POLR1G/RPA34. Part of Pol I pre-initiation complex (PIC), in which Pol I core assembles with RRN3 and promoter-bound UTBF and SL1/TIF-IB complex. Interacts (via dock II domain) with TOP2A; this interaction may assist Pol I transcription initiation by releasing supercoils occurring during DNA unwinding. Interacts with CAVIN1; this interaction induces the dissociation of Pol I complex paused at rDNA terminator sequences. Interacts with MYO1C. Interacts with ERBB2. Interacts with DDX11. Interacts with RECQL5. It depends on Mg(2+) as a cofactor. Phosphorylated.

Its subcellular location is the nucleus. The protein localises to the nucleolus. It localises to the chromosome. It catalyses the reaction RNA(n) + a ribonucleoside 5'-triphosphate = RNA(n+1) + diphosphate. In terms of biological role, catalytic core component of RNA polymerase I (Pol I), a DNA-dependent RNA polymerase which synthesizes ribosomal RNA precursors using the four ribonucleoside triphosphates as substrates. Transcribes 47S pre-rRNAs from multicopy rRNA gene clusters, giving rise to 5.8S, 18S and 28S ribosomal RNAs. Pol I-mediated transcription cycle proceeds through transcription initiation, transcription elongation and transcription termination stages. During transcription initiation, Pol I pre-initiation complex (PIC) is recruited by the selectivity factor 1 (SL1/TIF-IB) complex bound to the core promoter that precedes an rDNA repeat unit. The PIC assembly bends the promoter favoring the formation of the transcription bubble and promoter escape. Once the polymerase has escaped from the promoter it enters the elongation phase during which RNA is actively polymerized, based on complementarity with the template DNA strand. Highly processive, assembles in structures referred to as 'Miller trees' where many elongating Pol I complexes queue and transcribe the same rDNA coding regions. At terminator sequences downstream of the rDNA gene, PTRF interacts with Pol I and halts Pol I transcription leading to the release of the RNA transcript and polymerase from the DNA. Forms Pol I active center together with the second largest subunit POLR1B/RPA2. Appends one nucleotide at a time to the 3' end of the nascent RNA, with POLR1A/RPA1 contributing a Mg(2+)-coordinating DxDGD motif, and POLR1B/RPA2 participating in the coordination of a second Mg(2+) ion and providing lysine residues believed to facilitate Watson-Crick base pairing between the incoming nucleotide and the template base. Typically, Mg(2+) ions direct a 5' nucleoside triphosphate to form a phosphodiester bond with the 3' hydroxyl of the preceding nucleotide of the nascent RNA, with the elimination of pyrophosphate. Has proofreading activity: Pauses and backtracks to allow the cleavage of a missincorporated nucleotide via POLR1H/RPA12. High Pol I processivity is associated with decreased transcription fidelity. This chain is DNA-directed RNA polymerase I subunit RPA1, found in Rattus norvegicus (Rat).